The following is a 190-amino-acid chain: Probable nicotinate-nucleotide adenylyltransferase (190 aa).

Belongs to the NadD family.

It carries out the reaction nicotinate beta-D-ribonucleotide + ATP + H(+) = deamido-NAD(+) + diphosphate. Its pathway is cofactor biosynthesis; NAD(+) biosynthesis; deamido-NAD(+) from nicotinate D-ribonucleotide: step 1/1. In terms of biological role, catalyzes the reversible adenylation of nicotinate mononucleotide (NaMN) to nicotinic acid adenine dinucleotide (NaAD). The chain is Probable nicotinate-nucleotide adenylyltransferase from Borrelia turicatae (strain 91E135).